The following is a 620-amino-acid chain: Chaperone protein HscA homolog (620 aa).

This sequence belongs to the heat shock protein 70 family.

Chaperone involved in the maturation of iron-sulfur cluster-containing proteins. Has a low intrinsic ATPase activity which is markedly stimulated by HscB. This is Chaperone protein HscA homolog from Shewanella putrefaciens (strain CN-32 / ATCC BAA-453).